The primary structure comprises 93 residues: UPF0223 protein str0998 (93 aa).

This sequence belongs to the UPF0223 family.

The chain is UPF0223 protein str0998 from Streptococcus thermophilus (strain CNRZ 1066).